Here is a 921-residue protein sequence, read N- to C-terminus: Extended synaptotagmin-2 (921 aa).

The Cytoplasmic portion of the chain corresponds to 1 to 103 (MTANRDAALS…RPGGPENPGG (103 aa)). A disordered region spans residues 1 to 103 (MTANRDAALS…RPGGPENPGG (103 aa)). Basic residues predominate over residues 58–75 (GARRRAKTARGLRGHRQR). Residues 104 to 124 (VLSVELPGLLAQLARSFALLL) traverse the membrane as a helical segment. Residues 125–127 (PVY) are Lumenal-facing. Residues 128–148 (ALGYLGLSFSWVLLALALLAW) form a helical membrane-spanning segment. The Cytoplasmic portion of the chain corresponds to 149 to 921 (CRRSRGLKAL…EDGTRPQAMT (773 aa)). An SMP-LTD domain is found at 191–370 (DTERAEWLNK…LPNRITVPLV (180 aa)). 2 consecutive C2 domains span residues 369–489 (LVSE…DEWF) and 514–639 (NLDK…QLSN). Lys-400, Asp-401, Asp-413, Asp-460, Glu-461, Asp-462, Asp-464, Asp-466, and Asp-467 together coordinate Ca(2+). Residues 660–754 (RERPPDHQHS…GHISVKEPTP (95 aa)) are disordered. Phosphoserine is present on residues Ser-691 and Ser-693. A Phosphothreonine modification is found at Thr-705. A phosphoserine mark is found at Ser-736, Ser-738, Ser-739, Ser-743, Ser-748, Ser-755, Ser-758, and Ser-761. The region spanning 786–908 (PLGQIQLTIR…ELAKGWTQWY (123 aa)) is the C2 3 domain. Residues 833–840 (KRRSGRRK) form a required for phosphatidylinositol 4,5-bisphosphate-dependent location at the cell membrane region.

It belongs to the extended synaptotagmin family. Homodimer. Interacts with ESYT1 and ESYT3. Interacts with FGFR1 that has been activated by FGF1 binding. Interacts with the AP-2 complex; identified in a complex with the AP-2 complex and FGFR1. In terms of tissue distribution, widely expressed with high level in cerebellum.

Its subcellular location is the cell membrane. It is found in the endoplasmic reticulum membrane. Its function is as follows. Tethers the endoplasmic reticulum to the cell membrane and promotes the formation of appositions between the endoplasmic reticulum and the cell membrane. Binds glycerophospholipids in a barrel-like domain and may play a role in cellular lipid transport. Plays a role in FGF signaling via its role in the rapid internalization of FGFR1 that has been activated by FGF1 binding; this occurs most likely via the AP-2 complex. Promotes the localization of SACM1L at endoplasmic reticulum-plasma membrane contact sites (EPCS). In Homo sapiens (Human), this protein is Extended synaptotagmin-2.